The chain runs to 384 residues: Anhydro-N-acetylmuramic acid kinase (384 aa).

9–16 provides a ligand contact to ATP; it reads GTSVDGID.

It belongs to the anhydro-N-acetylmuramic acid kinase family.

The catalysed reaction is 1,6-anhydro-N-acetyl-beta-muramate + ATP + H2O = N-acetyl-D-muramate 6-phosphate + ADP + H(+). Its pathway is amino-sugar metabolism; 1,6-anhydro-N-acetylmuramate degradation. The protein operates within cell wall biogenesis; peptidoglycan recycling. Catalyzes the specific phosphorylation of 1,6-anhydro-N-acetylmuramic acid (anhMurNAc) with the simultaneous cleavage of the 1,6-anhydro ring, generating MurNAc-6-P. Is required for the utilization of anhMurNAc either imported from the medium or derived from its own cell wall murein, and thus plays a role in cell wall recycling. In Rippkaea orientalis (strain PCC 8801 / RF-1) (Cyanothece sp. (strain PCC 8801)), this protein is Anhydro-N-acetylmuramic acid kinase.